The primary structure comprises 599 residues: Group II intron-encoded protein LtrA (599 aa).

Residues 70-361 (IIQSLKDGTY…QPARFLGYDI (292 aa)) enclose the Reverse transcriptase domain. Residues 381-549 (NGSVELLIPL…AKCCELCGTS (169 aa)) form an intron maturase type-2 region.

The protein in the N-terminal section; belongs to the bacterial reverse transcriptase family. In terms of assembly, homodimer. It depends on Mg(2+) as a cofactor.

The enzyme catalyses DNA(n) + a 2'-deoxyribonucleoside 5'-triphosphate = DNA(n+1) + diphosphate. In terms of biological role, multifunctional protein that promotes group II intron splicing and mobility by acting both on RNA and DNA. It has three activities: reverse transcriptase (RT) for intron duplication, maturase to promote splicing, and DNA endonuclease for site-specific cleavage of recipient alleles. The intron-encoded protein promotes splicing by facilitating the formation of the catalytically active structure of the intron RNA. After splicing, the protein remains bound to the excised intron lariat RNA, forming ribonucleoprotein particles, and cleaving the antisense strand of the recipient DNA in the 3' exon. After DNA cleavage, retrohoming occurs by a target DNA-primed reverse transcription of the intron RNA that had reverse spliced into the sense strand of the recipient DNA. It also contributes to the recognition of the DNA target site and acts as a repressor of its own translation. This Lactococcus lactis subsp. cremoris (Streptococcus cremoris) protein is Group II intron-encoded protein LtrA (ltrA).